An 83-amino-acid chain; its full sequence is Small ribosomal subunit protein uS17 (83 aa).

It belongs to the universal ribosomal protein uS17 family. In terms of assembly, part of the 30S ribosomal subunit.

One of the primary rRNA binding proteins, it binds specifically to the 5'-end of 16S ribosomal RNA. This chain is Small ribosomal subunit protein uS17, found in Campylobacter concisus (strain 13826).